Consider the following 357-residue polypeptide: tRNA-specific 2-thiouridylase MnmA (357 aa).

Residues G7–S14 and L33 contribute to the ATP site. The active-site Nucleophile is C94. Residues C94 and C193 are joined by a disulfide bond. G119 provides a ligand contact to ATP. Positions K143 to Q145 are interaction with tRNA. The active-site Cysteine persulfide intermediate is C193. The interaction with tRNA stretch occupies residues R298–Y299.

This sequence belongs to the MnmA/TRMU family.

It is found in the cytoplasm. It catalyses the reaction S-sulfanyl-L-cysteinyl-[protein] + uridine(34) in tRNA + AH2 + ATP = 2-thiouridine(34) in tRNA + L-cysteinyl-[protein] + A + AMP + diphosphate + H(+). In terms of biological role, catalyzes the 2-thiolation of uridine at the wobble position (U34) of tRNA, leading to the formation of s(2)U34. The chain is tRNA-specific 2-thiouridylase MnmA from Synechococcus sp. (strain ATCC 27144 / PCC 6301 / SAUG 1402/1) (Anacystis nidulans).